Here is a 162-residue protein sequence, read N- to C-terminus: Protein archease (162 aa).

3 residues coordinate Ca(2+): Asp-34, Asp-161, and Ile-162.

This sequence belongs to the archease family. In terms of assembly, component of the tRNA-splicing ligase complex.

Functionally, component of the tRNA-splicing ligase complex required to facilitate the enzymatic turnover of catalytic subunit RTCB. Together with ddx1, acts by facilitating the guanylylation of RTCB, a key intermediate step in tRNA ligation. This is Protein archease from Ictalurus punctatus (Channel catfish).